Here is a 407-residue protein sequence, read N- to C-terminus: Aminomethyltransferase, mitochondrial (407 aa).

A mitochondrion-targeting transit peptide spans 1 to 29 (MRGGLWQLGQSITRRLGQSDKKTIVRRCY). 3 residues coordinate substrate: E234, R265, and Y403.

This sequence belongs to the GcvT family. The glycine cleavage system is composed of four proteins: P, T, L and H.

It localises to the mitochondrion. The enzyme catalyses N(6)-[(R)-S(8)-aminomethyldihydrolipoyl]-L-lysyl-[protein] + (6S)-5,6,7,8-tetrahydrofolate = N(6)-[(R)-dihydrolipoyl]-L-lysyl-[protein] + (6R)-5,10-methylene-5,6,7,8-tetrahydrofolate + NH4(+). The glycine cleavage system catalyzes the degradation of glycine. This Flaveria anomala (Yellowtops) protein is Aminomethyltransferase, mitochondrial (GDCST).